The chain runs to 260 residues: MLEINYDTKLLGVVGENISYTLSPAIHNYSFQELGINAVYLAFDIKSDEFKEIFPGLVKIAYGLNITIPYKEIAIKYVEAQSEAKRIGAINTIFNGKGYNTDYIAIKSLVQERIDKFETCTIFGAGGAARAAIFALHDLDCSINVINRSKEKAEKLIEEMRNKNIEIKITYNCKSDIIVNSTPNPDFVPDECVNGKLVIDFVYKPVITSLIKRAQNKNIKTINGIEILVRQAMEAEKIWFGKSLEDEEVVNYLYARKLIW.

The active-site Proton acceptor is the lysine 71. 124–128 (GAGGA) contributes to the NADP(+) binding site.

Belongs to the shikimate dehydrogenase family.

The catalysed reaction is shikimate + NADP(+) = 3-dehydroshikimate + NADPH + H(+). It functions in the pathway metabolic intermediate biosynthesis; chorismate biosynthesis; chorismate from D-erythrose 4-phosphate and phosphoenolpyruvate: step 4/7. The protein is Shikimate dehydrogenase (aroE) of Sulfurisphaera tokodaii (strain DSM 16993 / JCM 10545 / NBRC 100140 / 7) (Sulfolobus tokodaii).